A 334-amino-acid chain; its full sequence is uncharacterized protein (334 aa).

Belongs to the ADP-ribosylglycohydrolase family.

This is an uncharacterized protein from Escherichia coli (strain K12).